A 243-amino-acid chain; its full sequence is Thaumatin-like protein (243 aa).

A signal peptide spans 1-20 (MASINLFLFAFLLLLSHASA). Disulfide bonds link Cys-29-Cys-238, Cys-77-Cys-87, Cys-92-Cys-98, Cys-144-Cys-228, Cys-149-Cys-211, Cys-157-Cys-174, Cys-178-Cys-187, and Cys-188-Cys-198.

Belongs to the thaumatin family.

This Arabidopsis thaliana (Mouse-ear cress) protein is Thaumatin-like protein.